The sequence spans 280 residues: uncharacterized protein (280 aa).

Disordered regions lie at residues 20-41, 170-199, and 251-280; these read DVKK…QQQQ, INSP…KDKA, and GNSK…SFSF. Low complexity predominate over residues 25–41; the sequence is QQQQQQQPQAPPQQQQQ. A compositionally biased stretch (basic and acidic residues) spans 178–199; that stretch reads EEEKPQLSKKEEPEWLKGKDKA.

This is an uncharacterized protein from Dictyostelium discoideum (Social amoeba).